We begin with the raw amino-acid sequence, 761 residues long: Nitrogen fixation protein FixI (761 aa).

The Cytoplasmic portion of the chain corresponds to 1–120 (MSCCTMDAES…SAPESDKTRN (120 aa)). The HMA domain maps to 36 to 106 (RQLDLSVSDV…EINSAGYRAH (71 aa)). A metal cation contacts are provided by Cys-47 and Cys-50. A helical membrane pass occupies residues 121–142 (QLLLAIGVSGFAAPNIMLLSVS). Topologically, residues 143 to 155 (VWSGADAATRDMF) are extracellular. A helical membrane pass occupies residues 156 to 177 (HWISAMIAAPALVYAGRFFFKS). The Cytoplasmic portion of the chain corresponds to 178 to 184 (AWNALRH). A helical membrane pass occupies residues 185-205 (GRTNMDVPISVTVSLSYAVSL). The Extracellular segment spans residues 206 to 217 (WETVHHGEHAWF). The helical transmembrane segment at 218 to 238 (DASVSLLFFLLIGRTLDHIMR) threads the bilayer. Over 239–367 (EKARAAINGL…RARYRRIADR (129 aa)) the chain is Cytoplasmic. Residues 368–390 (AATLYSPVVHLLALVSFLAWGFL) traverse the membrane as a helical segment. Over 391-395 (GGDWK) the chain is Extracellular. The helical transmembrane segment at 396–415 (QAMLVAVAVLIITCPCALGL) threads the bilayer. The Cytoplasmic portion of the chain corresponds to 416–691 (AVPVVQVVAA…AVARRSASLI (276 aa)). The 4-aspartylphosphate intermediate role is filled by Asp-453. Mg(2+) is bound by residues Asp-637 and Asp-641. The chain crosses the membrane as a helical span at residues 692–711 (RQNFALAIGYNVLAVPIAIA). At 712–716 (GLATP) the chain is on the extracellular side. Residues 717 to 735 (LIAAVAMSTSSIIVVTNAL) form a helical membrane-spanning segment. At 736-761 (RLNGFGKRPDMHIRRGIGRSAEVKAA) the chain is on the cytoplasmic side.

Belongs to the cation transport ATPase (P-type) (TC 3.A.3) family. Type IB subfamily.

Its subcellular location is the cell membrane. The enzyme catalyses ATP + H2O = ADP + phosphate + H(+). FixI is a pump of a specific cation involved in symbiotic nitrogen fixation. The four proteins FixG, FixH, FixI, and FixS may participate in a membrane-bound complex coupling the FixI cation pump with a redox process catalyzed by FixG. The sequence is that of Nitrogen fixation protein FixI (fixI) from Rhizobium leguminosarum bv. viciae.